Consider the following 877-residue polypeptide: Leucine--tRNA ligase (877 aa).

A 'HIGH' region motif is present at residues 43-53; sequence PYPSGRIHMGH. The short motif at 628–632 is the 'KMSKS' region element; the sequence is KMSKS. Residue Lys-631 coordinates ATP.

The protein belongs to the class-I aminoacyl-tRNA synthetase family.

Its subcellular location is the cytoplasm. It carries out the reaction tRNA(Leu) + L-leucine + ATP = L-leucyl-tRNA(Leu) + AMP + diphosphate. In Brucella abortus (strain S19), this protein is Leucine--tRNA ligase.